The chain runs to 378 residues: Alpha-galactosidase (378 aa).

An N-terminal signal peptide occupies residues 1 to 15; it reads MVKSPGTEDYTRRSL. Disulfide bonds link C36-C68 and C116-C147. D145 acts as the Nucleophile in catalysis. A substrate-binding site is contributed by 178-182; that stretch reads EWGEE. The Proton donor role is filled by D200.

The protein belongs to the glycosyl hydrolase 27 family.

The catalysed reaction is Hydrolysis of terminal, non-reducing alpha-D-galactose residues in alpha-D-galactosides, including galactose oligosaccharides, galactomannans and galactolipids.. Functionally, preferentially cleaves alpha-1,3 and alpha-1,4 glycoside linkages. Involved in the hydrolysis of the galactomannan, it splits alpha-linked galactose moieties. It is particularly suitable for the hydrolysis of guar gum to a gum with improved gelling properties. Can cleave terminal alpha-1,3-linked galactose residues responsible for blood group B specificity from the surface of erythrocytes thereby converting these cells serologically to group O. The chain is Alpha-galactosidase from Coffea arabica (Arabian coffee).